Consider the following 121-residue polypeptide: Large ribosomal subunit protein uL18 (121 aa).

This sequence belongs to the universal ribosomal protein uL18 family. Part of the 50S ribosomal subunit; part of the 5S rRNA/L5/L18/L25 subcomplex. Contacts the 5S and 23S rRNAs.

In terms of biological role, this is one of the proteins that bind and probably mediate the attachment of the 5S RNA into the large ribosomal subunit, where it forms part of the central protuberance. The protein is Large ribosomal subunit protein uL18 of Moorella thermoacetica (strain ATCC 39073 / JCM 9320).